Reading from the N-terminus, the 392-residue chain is L-serine phosphate decarboxylase (392 aa).

Residues 22-29 (NAGSHSPS) are required for catalytic activity. Asparagine 180 lines the O-phospho-L-serine pocket. The residue at position 243 (lysine 243) is an N6-(pyridoxal phosphate)lysine. Residues arginine 354 and arginine 368 each coordinate O-phospho-L-serine.

This sequence belongs to the class-II pyridoxal-phosphate-dependent aminotransferase family. In terms of assembly, homodimer. The cofactor is pyridoxal 5'-phosphate.

It carries out the reaction O-phospho-L-serine + H(+) = phosphoethanolamine + CO2. Its pathway is cofactor biosynthesis. Functionally, pyridoxal phosphate (PLP)-dependent decarboxylase involved in the biosynthesis of norcobamides, cofactors in the tetrachloroethene reductive dehalogenase PceA of S.multivorans. Catalyzes the decarboxylation of L-serine O-phosphate to ethanolamine O-phosphate, the precursor for the linkage between the nucleotide loop and the corrin ring in norcobamide. Less active with L-threonine phosphate. No activity with L-serine or L-threonine. Has no aminotransferase activity as no production of L-glutamate with L-histidinol phosphate and 2-oxoglutarate as substrates. Complements growth defects in the S.enterica cobD deletion mutant, but of the cobamides, the norpseudo-vitamin B12 (norpseudo-B12) rather than the pseudo-B12 is produced in the mutant. However, addition of L-threonine phosphate to the culture minimal medium of the mutant results in formation of also the pseudo-B12, indicating the dual substrate specificity of this enzyme. This Sulfurospirillum multivorans (strain DM 12446 / JCM 15788 / NBRC 109480) protein is L-serine phosphate decarboxylase.